Here is a 1041-residue protein sequence, read N- to C-terminus: Nuclear pore complex protein NUP98A (1041 aa).

Positions 1–34 (MFGSSNPFGQSSGTSPFGSQSLFGQTSNTSSNNP) are enriched in polar residues. Residues 1–44 (MFGSSNPFGQSSGTSPFGSQSLFGQTSNTSSNNPFAPATPFGTS) form a disordered region. 44 tandem repeats follow at residues 2 to 3 (FG), 8 to 9 (FG), 17 to 18 (FG), 23 to 24 (FG), 41 to 42 (FG), 56 to 57 (FG), 64 to 65 (FG), 79 to 80 (FG), 87 to 88 (FG), 94 to 95 (FG), 103 to 104 (FG), 109 to 110 (FG), 124 to 125 (FG), 135 to 136 (FG), 140 to 141 (FG), 146 to 147 (FG), 154 to 155 (FG), 162 to 163 (FG), 170 to 171 (FG), 178 to 179 (FG), 186 to 187 (FG), 194 to 195 (FG), 202 to 203 (FG), 210 to 211 (FG), 217 to 218 (FG), 222 to 223 (FG), 228 to 229 (FG), 236 to 237 (FG), 244 to 245 (FG), 252 to 253 (FG), 260 to 261 (FG), 268 to 269 (FG), 276 to 277 (FG), 284 to 285 (FG), 294 to 295 (FG), 300 to 301 (FG), 307 to 308 (FG), 312 to 313 (FG), 319 to 320 (FG), 329 to 330 (FG), 334 to 335 (FG), 339 to 340 (FG), 411 to 412 (FG), and 427 to 428 (FG). Residues 2-677 (FGSSNPFGQS…QPVAVTNPFG (676 aa)) form a 65 X 2 AA repeats of F-G region. The tract at residues 98 to 171 (PASSPFGGSS…FGATSTPSFG (74 aa)) is disordered. Positions 117 to 171 (STPQSNPFGNSTQQSQPAFGNTSFGSSTPFGATNTPAFGAPSTPSFGATSTPSFG) are enriched in polar residues. Disordered stretches follow at residues 315 to 347 (TPSP…GGSR) and 392 to 447 (QRGD…TNPF). A compositionally biased stretch (low complexity) spans 430–447 (TSANPTNPFSSSTSTNPF). Tandem repeats lie at residues 459-460 (FG), 466-467 (FG), 471-472 (FG), 480-481 (FG), 491-492 (FG), 497-498 (FG), 506-507 (FG), 514-515 (FG), 521-522 (FG), 533-534 (FG), 555-556 (FG), 562-563 (FG), 565-566 (FG), 573-574 (FG), 586-587 (FG), 604-605 (FG), 627-628 (FG), 632-633 (FG), 650-651 (FG), 655-656 (FG), and 676-677 (FG). Positions 517 to 526 (SSSIFGSAPG) are enriched in low complexity. A disordered region spans residues 517 to 560 (SSSIFGSAPGQGATPAFGNSQPSTLFNSTPSTGQTGSAFGQTGS). The span at 533 to 560 (FGNSQPSTLFNSTPSTGQTGSAFGQTGS) shows a compositional bias: polar residues. A disordered region spans residues 734-860 (KYRPGENGPK…KERPYKTLSG (127 aa)). Basic and acidic residues predominate over residues 782-793 (SRDKSILPKEQR). A compositionally biased stretch (polar residues) spans 831–846 (TSVNANQKPNGTTRSD). A Peptidase S59 domain is found at 885–1027 (QSDYFTEPRI…GEWKFRVEHF (143 aa)).

This sequence belongs to the nucleoporin GLFG family. Part of the nuclear pore complex (NPC). The NPC has an eight-fold symmetrical structure comprising a central transport channel and two rings, the cytoplasmic and nuclear rings, to which eight filaments are attached. The cytoplasmic filaments have loose ends, while the nuclear filaments are joined in a distal ring, forming a nuclear basket. NPCs are highly dynamic in configuration and composition, and can be devided in 3 subcomplexes, the NUP62 subcomplex, the NUP107-160 subcomplex and the NUP93 subcomplex, containing approximately 30 different nucleoporin proteins.

The protein localises to the nucleus. It localises to the nuclear pore complex. In Arabidopsis thaliana (Mouse-ear cress), this protein is Nuclear pore complex protein NUP98A.